The chain runs to 101 residues: Toxin Tpa8 (101 aa).

A signal peptide spans 1–20 (MVKSEMKLVIFSLFLLLIGV). An LCN-type CS-alpha/beta domain is found at 24 to 98 (KNGYPVIEGG…VMDRTKEYCE (75 aa)). 4 disulfide bridges follow: cysteine 44–cysteine 70, cysteine 56–cysteine 75, cysteine 60–cysteine 77, and cysteine 71–cysteine 97.

The protein belongs to the long (4 C-C) scorpion toxin superfamily. Sodium channel inhibitor family. Beta subfamily. Expressed by the venom gland.

It is found in the secreted. Functionally, excitatory insect beta-toxins induce a spastic paralysis. They bind voltage-independently at site-4 of sodium channels (Nav) and shift the voltage of activation toward more negative potentials thereby affecting sodium channel activation and promoting spontaneous and repetitive firing. The protein is Toxin Tpa8 of Tityus pachyurus (Colombian scorpion).